A 492-amino-acid polypeptide reads, in one-letter code: MQFSCDPDQEGDELPQYEHIYQNDFSYRKHKKQKEEDISICECKFDFGDPDSACGERCLNVITNTECTPGYCPCGVYCKNQKFQKCEYAKTKLIKCEGRGWGLVALEEIKAGQFIMEYCGEVISWKEAKKRAQTYETHGVKDAYIISLNASEAIDATKKGSLARFINHSCRPNCETRKWNVLGEVRVGIFAKESISPRTELAYDYNFEWYGGAKVRCLCGAVACSGFLGAKSRGFQEDTYVWEDGDDRYSVDKIPVYDSAEDELTSEPSKNGESNTNEEKEKDISTENHLESTALNIQQQSDSTPTPMEEDVVTETVKTETSEDMKLLSQNSQEDSSPKTAIVSRVHGNISKIKSESLPKKRGRPFSGGKTKNVAQKHVDIANVVQLLATKEAQDEVLKYEEVKKEAAVRLSSLYDEIRPAIEEHERDSQDSVATSVAEKWIQASCNKLKAEFDLYSSVIKNIASTPIKPQDTKTKVAEAGNEDHIKLLEAK.

One can recognise an AWS domain in the interval glutamate 36–glutamate 87. The region spanning glutamine 84 to asparagine 206 is the SET domain. The region spanning alanine 213–glycine 229 is the Post-SET domain. The interval serine 259 to threonine 340 is disordered. A compositionally biased stretch (polar residues) spans serine 266–asparagine 275. Residues asparagine 277 to leucine 290 are compositionally biased toward basic and acidic residues. Residues glutamate 291–threonine 306 are compositionally biased toward polar residues. Residues valine 317–lysine 326 show a composition bias toward basic and acidic residues. The segment covering leucine 328–lysine 339 has biased composition (polar residues).

Belongs to the class V-like SAM-binding methyltransferase superfamily. Histone-lysine methyltransferase family. SET2 subfamily.

It is found in the nucleus. The protein localises to the chromosome. Its subcellular location is the centromere. It catalyses the reaction L-lysyl(4)-[histone H3] + 3 S-adenosyl-L-methionine = N(6),N(6),N(6)-trimethyl-L-lysyl(4)-[histone H3] + 3 S-adenosyl-L-homocysteine + 3 H(+). Its function is as follows. Histone methyltransferase involved in regulation of flowering time. Required for the expression of the SOC1/AGL20 gene. Required for histone H3 trimethylation on 'Lys-4' (H3K4me3) at the SOC1 locus. Prevents trimethylation on 'Lys-27' (H3K27me3) at the same locus. The polypeptide is Histone-lysine N-methyltransferase ASHH1 (ASHH1) (Arabidopsis thaliana (Mouse-ear cress)).